The primary structure comprises 113 residues: Large ribosomal subunit protein uL22 (113 aa).

This sequence belongs to the universal ribosomal protein uL22 family. Part of the 50S ribosomal subunit.

Functionally, this protein binds specifically to 23S rRNA; its binding is stimulated by other ribosomal proteins, e.g. L4, L17, and L20. It is important during the early stages of 50S assembly. It makes multiple contacts with different domains of the 23S rRNA in the assembled 50S subunit and ribosome. The globular domain of the protein is located near the polypeptide exit tunnel on the outside of the subunit, while an extended beta-hairpin is found that lines the wall of the exit tunnel in the center of the 70S ribosome. The polypeptide is Large ribosomal subunit protein uL22 (Bacillus cereus (strain ATCC 10987 / NRS 248)).